Here is a 175-residue protein sequence, read N- to C-terminus: Co-chaperone protein HscB homolog (175 aa).

Residues 7–79 enclose the J domain; that stretch reads SHFDLFHLPA…LKRATYLLHL (73 aa).

The protein belongs to the HscB family. In terms of assembly, interacts with HscA and stimulates its ATPase activity.

In terms of biological role, co-chaperone involved in the maturation of iron-sulfur cluster-containing proteins. Seems to help targeting proteins to be folded toward HscA. This chain is Co-chaperone protein HscB homolog, found in Burkholderia mallei (strain ATCC 23344).